We begin with the raw amino-acid sequence, 498 residues long: AP2-like ethylene-responsive transcription factor AIL7 (498 aa).

Polar residues predominate over residues 186–195; sequence TSDQPLSCNN. The disordered stretch occupies residues 186-220; it reads TSDQPLSCNNGERGGNSNKKKTVSKKETSDDSKKK. The segment covering 209-220 has biased composition (basic and acidic residues); it reads SKKETSDDSKKK. DNA-binding regions (AP2/ERF) lie at residues 231–297 and 333–391; these read IYRG…TNFP and IYRG…TNFE. Residues 422 to 451 are compositionally biased toward low complexity; sequence ESPSSSSSDHNLQQQQLLPSSSPSDQNPNS. Residues 422 to 452 form a disordered region; the sequence is ESPSSSSSDHNLQQQQLLPSSSPSDQNPNSI.

This sequence belongs to the AP2/ERF transcription factor family. AP2 subfamily. As to quaternary structure, interacts with HDG2, and possibly with HDG3, HDG7, ANL2, ATML1 and PDF2. As to expression, expressed in roots, seedlings, inflorescence, and siliques. Also detected at low levels in leaves.

The protein resides in the nucleus. Probably acts as a transcriptional activator. Binds to the GCC-box pathogenesis-related promoter element. May be involved in the regulation of gene expression by stress factors and by components of stress signal transduction pathways. The chain is AP2-like ethylene-responsive transcription factor AIL7 from Arabidopsis thaliana (Mouse-ear cress).